The following is a 266-amino-acid chain: Pyridoxal phosphate phosphatase YigL (266 aa).

The active-site Nucleophile is the Asp-8. Mg(2+) is bound at residue Asp-8. A phosphate-binding site is contributed by Leu-9. Mg(2+) is bound at residue Asp-10. Phosphate-binding positions include Thr-42–Gly-43 and Lys-191. A Mg(2+)-binding site is contributed by Asp-214. Asn-217 serves as a coordination point for phosphate.

It belongs to the HAD-like hydrolase superfamily. Cof family. Mg(2+) is required as a cofactor. Mn(2+) serves as cofactor. Requires Co(2+) as cofactor. The cofactor is Zn(2+).

It catalyses the reaction pyridoxal 5'-phosphate + H2O = pyridoxal + phosphate. The enzyme catalyses sugar phosphate + H2O = sugar + phosphate.. In terms of biological role, catalyzes the dephosphorylation of pyridoxal-phosphate (PLP) and sugar phosphate. The sequence is that of Pyridoxal phosphate phosphatase YigL (yigL) from Escherichia coli O157:H7.